The chain runs to 359 residues: Protein RecA (359 aa).

64-71 (GHESSGKT) serves as a coordination point for ATP. The interval 328-359 (NKYPNKDSNDSPKEGSKIKTKVNPAVTQDELI) is disordered. A compositionally biased stretch (basic and acidic residues) spans 331–344 (PNKDSNDSPKEGSK).

This sequence belongs to the RecA family.

The protein resides in the cytoplasm. Its function is as follows. Can catalyze the hydrolysis of ATP in the presence of single-stranded DNA, the ATP-dependent uptake of single-stranded DNA by duplex DNA, and the ATP-dependent hybridization of homologous single-stranded DNAs. It interacts with LexA causing its activation and leading to its autocatalytic cleavage. The protein is Protein RecA of Francisella tularensis subsp. novicida (strain U112).